Consider the following 75-residue polypeptide: UPF0352 protein CKO_00587 (75 aa).

This sequence belongs to the UPF0352 family.

The polypeptide is UPF0352 protein CKO_00587 (Citrobacter koseri (strain ATCC BAA-895 / CDC 4225-83 / SGSC4696)).